A 379-amino-acid polypeptide reads, in one-letter code: Cytochrome b (379 aa).

Transmembrane regions (helical) follow at residues 33–53, 77–98, 113–133, and 178–198; these read FGSL…FLAM, WTIR…FIHV, WNIG…GYVL, and FFAL…IHLL. Heme b is bound by residues His83 and His97. His182 and His196 together coordinate heme b. An a ubiquinone-binding site is contributed by His201. 4 consecutive transmembrane segments (helical) span residues 226–246, 288–308, 320–340, and 347–367; these read TKDF…TLFY, PGGV…PFLQ, LSQF…WIGG, and FISI…FIMP.

This sequence belongs to the cytochrome b family. In terms of assembly, the cytochrome bc1 complex contains 11 subunits: 3 respiratory subunits (MT-CYB, CYC1 and UQCRFS1), 2 core proteins (UQCRC1 and UQCRC2) and 6 low-molecular weight proteins (UQCRH/QCR6, UQCRB/QCR7, UQCRQ/QCR8, UQCR10/QCR9, UQCR11/QCR10 and a cleavage product of UQCRFS1). This cytochrome bc1 complex then forms a dimer. Requires heme b as cofactor.

The protein resides in the mitochondrion inner membrane. Functionally, component of the ubiquinol-cytochrome c reductase complex (complex III or cytochrome b-c1 complex) that is part of the mitochondrial respiratory chain. The b-c1 complex mediates electron transfer from ubiquinol to cytochrome c. Contributes to the generation of a proton gradient across the mitochondrial membrane that is then used for ATP synthesis. The protein is Cytochrome b (MT-CYB) of Lepilemur ruficaudatus (Red-tailed sportive lemur).